The following is a 228-amino-acid chain: NAD(P)H-hydrate epimerase (228 aa).

In terms of domain architecture, YjeF N-terminal spans 9 to 209 (VRAVERLAHR…LLGLTPAFLA (201 aa)). 53–57 (NNGGD) is a (6S)-NADPHX binding site. 2 residues coordinate K(+): Asn-54 and Asp-115. Residues 119–125 (GIGLARP) and Asp-148 contribute to the (6S)-NADPHX site. A K(+)-binding site is contributed by Ser-151.

Belongs to the NnrE/AIBP family. It depends on K(+) as a cofactor.

It carries out the reaction (6R)-NADHX = (6S)-NADHX. It catalyses the reaction (6R)-NADPHX = (6S)-NADPHX. Its function is as follows. Catalyzes the epimerization of the S- and R-forms of NAD(P)HX, a damaged form of NAD(P)H that is a result of enzymatic or heat-dependent hydration. This is a prerequisite for the S-specific NAD(P)H-hydrate dehydratase to allow the repair of both epimers of NAD(P)HX. This chain is NAD(P)H-hydrate epimerase, found in Bordetella pertussis (strain CS).